The primary structure comprises 34 residues: Histone H1, sperm (34 aa).

The tract at residues 1 to 34 (PASPQKRAASPRRSPKKSPRKSPKKSPRKRSASP) is disordered. The segment covering 9-34 (ASPRRSPKKSPRKSPKKSPRKRSASP) has biased composition (basic residues).

Belongs to the histone H1/H5 family. As to expression, sperm.

It is found in the nucleus. It localises to the chromosome. In terms of biological role, histones H1 are necessary for the condensation of nucleosome chains into higher-order structures. The polypeptide is Histone H1, sperm (Strongylocentrotus purpuratus (Purple sea urchin)).